A 323-amino-acid chain; its full sequence is Elongation factor P--(R)-beta-lysine ligase (323 aa).

Residue 74-76 (SPE) participates in substrate binding. ATP-binding positions include 98 to 100 (RNE) and asparagine 107. A substrate-binding site is contributed by tyrosine 116. 242–243 (EL) contacts ATP. Glutamate 249 serves as a coordination point for substrate. An ATP-binding site is contributed by glycine 298.

This sequence belongs to the class-II aminoacyl-tRNA synthetase family. EpmA subfamily. As to quaternary structure, homodimer.

It carries out the reaction D-beta-lysine + L-lysyl-[protein] + ATP = N(6)-((3R)-3,6-diaminohexanoyl)-L-lysyl-[protein] + AMP + diphosphate + H(+). Functionally, with EpmB is involved in the beta-lysylation step of the post-translational modification of translation elongation factor P (EF-P). Catalyzes the ATP-dependent activation of (R)-beta-lysine produced by EpmB, forming a lysyl-adenylate, from which the beta-lysyl moiety is then transferred to the epsilon-amino group of a conserved specific lysine residue in EF-P. This chain is Elongation factor P--(R)-beta-lysine ligase, found in Vibrio parahaemolyticus serotype O3:K6 (strain RIMD 2210633).